The sequence spans 83 residues: Cytotoxin A5 (83 aa).

Positions M1–T21 are cleaved as a signal peptide. Disulfide bonds link C24–C43, C36–C61, C65–C76, and C77–C82.

The protein belongs to the three-finger toxin family. Short-chain subfamily. Orphan group XV sub-subfamily. As to expression, expressed by the venom gland.

It localises to the secreted. The protein resides in the target cell membrane. Its function is as follows. Non-cytotoxic protein that does not show lytic and hemolytic activities, but can induce aggregation and fusion of sphingomyelin vesicles. It binds to integrin alpha-V/beta-3 (ITGAV/ITGB3) with high affinity, and it inhibits osteoclast differentiation and bone resorption in mice, probably due to binding to integrin alpha-V/beta-3. In Naja atra (Chinese cobra), this protein is Cytotoxin A5.